The chain runs to 805 residues: Phenylalanine--tRNA ligase beta subunit (805 aa).

One can recognise a tRNA-binding domain in the interval 39–148; the sequence is APPFTGVVVA…AALRPGTDIR (110 aa). The region spanning 399-474 is the B5 domain; sequence PVREPVRMRL…RVYGFERIPD (76 aa). Residues Asp452, Asp458, Glu461, and Glu462 each contribute to the Mg(2+) site. Positions 703 to 804 constitute an FDX-ACB domain; that stretch reads SRQPAVVRDL…LVAAHNARQR (102 aa).

The protein belongs to the phenylalanyl-tRNA synthetase beta subunit family. Type 1 subfamily. As to quaternary structure, tetramer of two alpha and two beta subunits. Mg(2+) serves as cofactor.

The protein localises to the cytoplasm. The catalysed reaction is tRNA(Phe) + L-phenylalanine + ATP = L-phenylalanyl-tRNA(Phe) + AMP + diphosphate + H(+). This Bordetella bronchiseptica (strain ATCC BAA-588 / NCTC 13252 / RB50) (Alcaligenes bronchisepticus) protein is Phenylalanine--tRNA ligase beta subunit.